Here is a 161-residue protein sequence, read N- to C-terminus: UPF0262 protein SPOA0072 (161 aa).

A disordered region spans residues 1-21 (MTMSRISHIELDDSNLPPPTP).

The protein belongs to the UPF0262 family.

The chain is UPF0262 protein SPOA0072 from Ruegeria pomeroyi (strain ATCC 700808 / DSM 15171 / DSS-3) (Silicibacter pomeroyi).